Here is a 94-residue protein sequence, read N- to C-terminus: Acylphosphatase (94 aa).

The region spanning 8-94 (TLFIIVHGKV…GRRFKHFAQH (87 aa)) is the Acylphosphatase-like domain. Active-site residues include R23 and N41. The segment at 69 to 94 (PPAASVTELESRREDGGRRFKHFAQH) is disordered. A compositionally biased stretch (basic and acidic residues) spans 77–86 (LESRREDGGR).

It belongs to the acylphosphatase family.

The catalysed reaction is an acyl phosphate + H2O = a carboxylate + phosphate + H(+). This chain is Acylphosphatase (acyP), found in Bordetella avium (strain 197N).